The chain runs to 550 residues: Forkhead box protein N4 (550 aa).

The fork-head DNA-binding region spans 231-327; sequence KPIYSYSCLI…EEMQKWKRKD (97 aa). A compositionally biased stretch (low complexity) spans 402–411; that stretch reads LQNQSRLAPS. Positions 402–437 are disordered; it reads LQNQSRLAPSSPAPAQTPPLHTVPDMTNSSLPQHPA.

Isoform 1 is expressed mainly in adult thymus. Isoform 2 is detected in adult skin. Isoform 3 is expressed in adult brain and embryo. Prominent expression sites include the olfactory placode, the basal layer of the olfactory epithelium, the neuroepithelium of the developing retina, the germinal zone of the differentiated eye, regions of motoneuron development in the neural tube and periventricular regions of the brain.

The protein resides in the nucleus. In terms of biological role, transcription factor essential for neural and some non-neural tissues development. Binds to an 11-bp consensus sequence containing the invariant tetranucleotide 5'-ACGC-3'. During development of the central nervous system, required to specify the amacrine and horizontal cell fates from multipotent retinal progenitors while suppressing the alternative photoreceptor cell fates. Drives commitment of p2 progenitors to the V2b interneuron fates during spinal cord neurogenesis. In development of non-neural tissues, plays an essential role in the specification of the atrioventricular canal. The polypeptide is Forkhead box protein N4 (foxn4) (Danio rerio (Zebrafish)).